The primary structure comprises 229 residues: MPFKKINIAIDGPSGVGKSTIAKQIANKFNYLFINTGSLYRAIAFFCQKNQISITSERKMIKHLPPNFLSLDFEGNVWLQNQNVSNLLRNDLISKNAAIIAQYPQIRKIVTEILQNFQKNHKGIIMEGRDTTYNVMPDADLKIFLWADAETRAKRRLKQNTFLNLETDFQEILKAIEHRDYLDMTRKTNPLKKTVDSIFLDTTNFTRDQIVSQISKLVFRKIGQFSLEI.

Residue 12–20 (GPSGVGKST) participates in ATP binding.

This sequence belongs to the cytidylate kinase family. Type 1 subfamily.

It is found in the cytoplasm. It carries out the reaction CMP + ATP = CDP + ADP. The catalysed reaction is dCMP + ATP = dCDP + ADP. The protein is Cytidylate kinase of Mesomycoplasma hyopneumoniae (strain 7448) (Mycoplasma hyopneumoniae).